The following is a 406-amino-acid chain: Probable 2,3-bisphosphoglycerate-independent phosphoglycerate mutase (406 aa).

Belongs to the BPG-independent phosphoglycerate mutase family. A-PGAM subfamily.

It carries out the reaction (2R)-2-phosphoglycerate = (2R)-3-phosphoglycerate. Its pathway is carbohydrate degradation; glycolysis; pyruvate from D-glyceraldehyde 3-phosphate: step 3/5. Functionally, catalyzes the interconversion of 2-phosphoglycerate and 3-phosphoglycerate. The chain is Probable 2,3-bisphosphoglycerate-independent phosphoglycerate mutase from Thermus thermophilus (strain ATCC BAA-163 / DSM 7039 / HB27).